Here is a 385-residue protein sequence, read N- to C-terminus: Polyketide synthase 1 (385 aa).

The active site involves Cys157.

The protein belongs to the thiolase-like superfamily. Chalcone/stilbene synthases family. In terms of tissue distribution, expressed in glandular trichomes.

It localises to the cytoplasm. Functionally, polyketide synthase responsible for the biosynthesis of secondary metabolites. The polypeptide is Polyketide synthase 1 (PKSG1) (Cannabis sativa (Hemp)).